A 227-amino-acid chain; its full sequence is Phosphoglycolate phosphatase (227 aa).

D13 functions as the Nucleophile in the catalytic mechanism. Mg(2+)-binding residues include D13, D15, and D176.

Belongs to the HAD-like hydrolase superfamily. CbbY/CbbZ/Gph/YieH family. Requires Mg(2+) as cofactor.

It carries out the reaction 2-phosphoglycolate + H2O = glycolate + phosphate. The protein operates within organic acid metabolism; glycolate biosynthesis; glycolate from 2-phosphoglycolate: step 1/1. Its function is as follows. Specifically catalyzes the dephosphorylation of 2-phosphoglycolate. Is involved in the dissimilation of the intracellular 2-phosphoglycolate formed during the DNA repair of 3'-phosphoglycolate ends, a major class of DNA lesions induced by oxidative stress. The polypeptide is Phosphoglycolate phosphatase (Nitrosospira multiformis (strain ATCC 25196 / NCIMB 11849 / C 71)).